The chain runs to 217 residues: MHIMEGYLPPEWAAFWYVFAIPFLVYGALRVKRIIEEKPSMKSLIAVSAGFIFVLSALKLPSVTGSCSHPTGTGIAVVFFGPAVTALLSAIVLLYQALLLAHGGITTLGANTASMGVIGPFVGWIAFKLLKNVNFRVAVFAAAMLSDLVTYVVTSLQLALAFPSSAGVAGIIKSAATFMGIFAVTQVPLSIIEGVVAVMLVSYIFEVRSDVLEVVKA.

The next 6 membrane-spanning stretches (helical) occupy residues 8-28 (LPPE…VYGA), 44-64 (LIAV…PSVT), 74-94 (GIAV…IVLL), 107-127 (TLGA…WIAF), 139-161 (VFAA…LALA), and 181-201 (IFAV…VMLV).

Belongs to the CbiM family. In terms of assembly, forms an energy-coupling factor (ECF) transporter complex composed of an ATP-binding protein (A component, CbiO), a transmembrane protein (T component, CbiQ) and 2 possible substrate-capture proteins (S components, CbiM and CbiN) of unknown stoichimetry.

It localises to the cell membrane. The protein operates within cofactor biosynthesis; adenosylcobalamin biosynthesis. Its function is as follows. Part of the energy-coupling factor (ECF) transporter complex CbiMNOQ involved in cobalt import. This Archaeoglobus fulgidus (strain ATCC 49558 / DSM 4304 / JCM 9628 / NBRC 100126 / VC-16) protein is Putative cobalt transport protein CbiM.